Reading from the N-terminus, the 207-residue chain is Pyridoxine/pyridoxamine 5'-phosphate oxidase (207 aa).

Residues 53–58, 68–69, lysine 75, and glutamine 97 contribute to the FMN site; these read RMVLLK and YT. Lysine 58 contributes to the substrate binding site. Residues tyrosine 115, arginine 119, and serine 123 each coordinate substrate. FMN contacts are provided by residues 132-133 and tryptophan 177; that span reads QS. 183-185 lines the substrate pocket; that stretch reads RLH. An FMN-binding site is contributed by arginine 187.

This sequence belongs to the pyridoxamine 5'-phosphate oxidase family. As to quaternary structure, homodimer. Requires FMN as cofactor.

It catalyses the reaction pyridoxamine 5'-phosphate + O2 + H2O = pyridoxal 5'-phosphate + H2O2 + NH4(+). It carries out the reaction pyridoxine 5'-phosphate + O2 = pyridoxal 5'-phosphate + H2O2. The protein operates within cofactor metabolism; pyridoxal 5'-phosphate salvage; pyridoxal 5'-phosphate from pyridoxamine 5'-phosphate: step 1/1. Its pathway is cofactor metabolism; pyridoxal 5'-phosphate salvage; pyridoxal 5'-phosphate from pyridoxine 5'-phosphate: step 1/1. Functionally, catalyzes the oxidation of either pyridoxine 5'-phosphate (PNP) or pyridoxamine 5'-phosphate (PMP) into pyridoxal 5'-phosphate (PLP). The chain is Pyridoxine/pyridoxamine 5'-phosphate oxidase from Bartonella quintana (strain Toulouse) (Rochalimaea quintana).